A 222-amino-acid chain; its full sequence is Small ribosomal subunit protein uS7m (222 aa).

The N-terminal 14 residues, 1-14, are a transit peptide targeting the mitochondrion; the sequence is MSKKLANFAQKRWI.

This sequence belongs to the universal ribosomal protein uS7 family. Component of the mitochondrial ribosome small subunit (28S) which comprises a 12S rRNA and about 30 distinct proteins.

It localises to the mitochondrion. The polypeptide is Small ribosomal subunit protein uS7m (mrps-7) (Caenorhabditis briggsae).